The following is an 88-amino-acid chain: ATP synthase F(0) complex subunit f, mitochondrial (88 aa).

N-acetylalanine is present on A2. At S3 the chain carries Phosphoserine. K16 bears the N6-acetyllysine mark. The helical transmembrane segment at 62–79 (MVLAAYVVFSYCISYKEL) threads the bilayer.

This sequence belongs to the ATPase F chain family. As to quaternary structure, component of the ATP synthase complex composed at least of ATP5F1A/subunit alpha, ATP5F1B/subunit beta, ATP5MC1/subunit c (homooctomer), MT-ATP6/subunit a, MT-ATP8/subunit 8, ATP5ME/subunit e, ATP5MF/subunit f, ATP5MG/subunit g, ATP5MK/subunit k, ATP5MJ/subunit j, ATP5F1C/subunit gamma, ATP5F1D/subunit delta, ATP5F1E/subunit epsilon, ATP5PF/subunit F6, ATP5PB/subunit b, ATP5PD/subunit d, ATP5PO/subunit OSCP. ATP synthase complex consists of a soluble F(1) head domain (subunits alpha(3) and beta(3)) - the catalytic core - and a membrane F(0) domain - the membrane proton channel (subunits c, a, 8, e, f, g, k and j). These two domains are linked by a central stalk (subunits gamma, delta, and epsilon) rotating inside the F1 region and a stationary peripheral stalk (subunits F6, b, d, and OSCP).

The protein localises to the mitochondrion. The protein resides in the mitochondrion inner membrane. Its function is as follows. Subunit f, of the mitochondrial membrane ATP synthase complex (F(1)F(0) ATP synthase or Complex V) that produces ATP from ADP in the presence of a proton gradient across the membrane which is generated by electron transport complexes of the respiratory chain. ATP synthase complex consist of a soluble F(1) head domain - the catalytic core - and a membrane F(1) domain - the membrane proton channel. These two domains are linked by a central stalk rotating inside the F(1) region and a stationary peripheral stalk. During catalysis, ATP synthesis in the catalytic domain of F(1) is coupled via a rotary mechanism of the central stalk subunits to proton translocation. In vivo, can only synthesize ATP although its ATP hydrolase activity can be activated artificially in vitro. Part of the complex F(0) domain. This Rattus norvegicus (Rat) protein is ATP synthase F(0) complex subunit f, mitochondrial.